Here is a 608-residue protein sequence, read N- to C-terminus: Serine/threonine-protein kinase ROP17 (608 aa).

A signal peptide spans 1 to 21 (MELVLCFVIITISGVIRESSA). A glycan (N-linked (GlcNAc...) asparagine) is linked at Asn-76. One can recognise a Protein kinase domain in the interval 283–579 (LKKRGFLGGG…QQALEQFSLL (297 aa)). Residues 289–297 (LGGGGFGLV) and Lys-312 contribute to the ATP site. The active-site Proton acceptor is Asp-436.

This sequence belongs to the protein kinase superfamily. Ser/Thr protein kinase family. In terms of assembly, interacts with ROP5; interaction with ROP5 does not affect kinase activity. Interacts with human BCL2; the interaction probably promotes BCL2 phosphorylation and degradation.

It localises to the secreted. The protein localises to the cytoplasmic vesicle. The protein resides in the secretory vesicle. Its subcellular location is the rhoptry. It is found in the parasitophorous vacuole membrane. It catalyses the reaction L-threonyl-[protein] + ATP = O-phospho-L-threonyl-[protein] + ADP + H(+). The catalysed reaction is L-seryl-[protein] + ATP = O-phospho-L-seryl-[protein] + ADP + H(+). Protein kinase. Virulence factor. Promotes migration of Toxoplasma-infected macrophages through collagen matrix, facilitating parasite transport through tissues and systemic dissemination. Plays a role in the translocation of dense granule effectors, such as GRA16 and GRA24, across the parasitophorous vacuole membrane in Toxoplasma-infected host cells. Phosphorylates mouse IRGB6 (TGTP1/TGTP2), an immunity-related GTPase (IRG) that protects mice from infection by certain intracellular pathogens; the phosphorylation leads to the disassembly of IRGB6 polymers into monomers and dimers. May modulate gene expression in human cells. Promotes autophagy in human cells via modulation of the BCL2-BECN1 pathway. The chain is Serine/threonine-protein kinase ROP17 from Toxoplasma gondii.